The sequence spans 707 residues: Leucine-rich repeat neuronal protein 3 (707 aa).

The first 22 residues, 1 to 22, serve as a signal peptide directing secretion; that stretch reads MKDTPLQVHVLLGLAITTLVQA. Positions 23–69 constitute an LRRNT domain; the sequence is IDKKVDCPQLCTCEIRPWFTPRSIYMEASTVDCNDLGLLNFPARLPA. Residues 23–626 lie on the Extracellular side of the membrane; that stretch reads IDKKVDCPQL…DGKEYGKNHT (604 aa). LRR repeat units lie at residues 70–91, 93–114, 117–138, 141–162, 165–186, 189–210, 213–234, 237–258, 261–282, 285–304, 310–332, and 335–358; these read DTQILLLQTNNIARIEHSTDFP, NLTGLDLSQNNLSSVTNINVQK, QLLSVYLEENKLTELPEKCLYG, NLQELYVNHNLLSTISPGAFIG, NLLRLHLNSNRLQMINSQWFDA, NLEILMLGDNPIIRIKDMNFQP, KLRSLVIAGINLTEIPDDALAG, NLESISFYDNRLSKVPQVALQK, NLKFLDLNKNPINRIRRGDFSN, HLKELGINNMPELVSIDSLA, DLRKIEATNNPRLSYIHPNAFFR, and KLESLMLNTNALSALYHGTIESLP. Asparagine 93 and asparagine 103 each carry an N-linked (GlcNAc...) asparagine glycan. N-linked (GlcNAc...) asparagine glycosylation is present at asparagine 223. The LRRCT domain occupies 368–421; sequence NPIRCDCVIRWINMNKTNIRFMEPDSLFCVDPPEFQGQNVRQVHFRDMMEICLP. N-linked (GlcNAc...) asparagine glycosylation occurs at asparagine 382. One can recognise an Ig-like C2-type domain in the interval 421–514; sequence PLIAPESFPS…DLKSIMIKVG (94 aa). A disulfide bond links cysteine 444 and cysteine 496. Asparagine 522, asparagine 579, asparagine 608, and asparagine 624 each carry an N-linked (GlcNAc...) asparagine glycan. Residues 523 to 614 form the Fibronectin type-III domain; sequence GSLNIKIRDI…QCVNVTTKSL (92 aa). The chain crosses the membrane as a helical span at residues 627-647; it reads VFVACVGGLLGIIGVMCLFSC. The Cytoplasmic portion of the chain corresponds to 648–707; the sequence is VSQEGSSEGEHSYAVNHCHKPALAFSELYPPLINLWESSKEKRATLEVKATAIGVPTNMS.

As to expression, expressed in the brain, in Stronger expression in the ventricular zone and anlage of thalamus, spinal cord, and dorsal root ganglion in 11-17 dpc cerebellum and cerebral cortex in adults.

It is found in the membrane. This is Leucine-rich repeat neuronal protein 3 (Lrrn3) from Mus musculus (Mouse).